A 101-amino-acid chain; its full sequence is Enhancer of yellow 2 transcription factor (101 aa).

The protein belongs to the ENY2 family. In terms of assembly, component of the nuclear pore complex (NPC)-associated AMEX complex (anchoring and mRNA export complex), composed of at least e(y)2 and xmas-2. Component of the SAGA transcription coactivator-HAT complexes, at least composed of Ada2b, e(y)2, Pcaf/Gcn5, Taf10 and Nipped-A/Trrap. Within the SAGA complex, e(y)2, Sgf11, and not/nonstop form an additional subcomplex of SAGA called the DUB module (deubiquitination module). Component of the THO complex, composed of at least e(y)2, HPR1, THO2, THOC5, THOC6 and THOC7. Interacts with e(y)1. Interacts with su(Hw) (via zinc fingers). Interacts with xmas-2; required for localization to the nuclear periphery. Interacts with the nuclear pore complex (NPC).

It is found in the nucleus. It localises to the nucleoplasm. Its subcellular location is the cytoplasm. In terms of biological role, involved in mRNA export coupled transcription activation by association with both the AMEX and the SAGA complexes. The SAGA complex is a multiprotein complex that activates transcription by remodeling chromatin and mediating histone acetylation and deubiquitination. Within the SAGA complex, participates in a subcomplex that specifically deubiquitinates histone H2B. The SAGA complex is recruited to specific gene promoters by activators, where it is required for transcription. Required for nuclear receptor-mediated transactivation. Involved in transcription elongation by recruiting the THO complex onto nascent mRNA. The AMEX complex functions in docking export-competent ribonucleoprotein particles (mRNPs) to the nuclear entrance of the nuclear pore complex (nuclear basket). AMEX participates in mRNA export and accurate chromatin positioning in the nucleus by tethering genes to the nuclear periphery. The protein is Enhancer of yellow 2 transcription factor of Drosophila erecta (Fruit fly).